The sequence spans 68 residues: Protein P33 (68 aa).

Positions 34–63 (IVNLQGRIAELEARETEMLARVDTLIARLA) form a coiled coil.

Its function is as follows. Assembly protein. The protein is Protein P33 (XXXIII) of Acinetobacter calcoaceticus (Arthrobacter siderocapsulatus).